The primary structure comprises 205 residues: Small ribosomal subunit protein uS4 (205 aa).

Basic and acidic residues predominate over residues 1–16 (MSKRESAKHKIDRRLG). The interval 1 to 46 (MSKRESAKHKIDRRLGENIWGRPKSPVNRREYGPGQHGQRRKGKLS) is disordered. Positions 94–157 (SRLDAVVYRA…KQLAIVLEAV (64 aa)) constitute an S4 RNA-binding domain.

This sequence belongs to the universal ribosomal protein uS4 family. In terms of assembly, part of the 30S ribosomal subunit. Contacts protein S5. The interaction surface between S4 and S5 is involved in control of translational fidelity.

One of the primary rRNA binding proteins, it binds directly to 16S rRNA where it nucleates assembly of the body of the 30S subunit. Its function is as follows. With S5 and S12 plays an important role in translational accuracy. In Brucella abortus (strain S19), this protein is Small ribosomal subunit protein uS4.